The primary structure comprises 612 residues: Pentatricopeptide repeat-containing protein At4g14050, mitochondrial (612 aa).

Residues 1–24 (MLIPHYLHQLQLCARNRTLTTAKA) constitute a mitochondrion transit peptide. 11 PPR repeats span residues 37–71 (CCPL…DHIA), 72–103 (WASV…GLRP), 104–138 (DDFV…EYAN), 139–169 (DEVV…IRVK), 170–204 (NTIS…NLYS), 205–235 (WTAL…RVDI), 237–271 (DPLV…GFDS), 272–302 (CVFI…MRHR), 303–337 (DVVS…GVKP), 338–373 (NEVT…GIRP), and 374–408 (SLQH…PDEP). Residues 409–485 (TWAALLSACK…DPGHSSVEVR (77 aa)) are type E motif. The type E(+) motif stretch occupies residues 486-516 (KETEVFYAGETSHPLKEDIFRLLKKLEEEMR). The type DYW motif stretch occupies residues 518-612 (RNGYVPDTSW…GGKCSCNDFW (95 aa)).

The protein belongs to the PPR family. PCMP-H subfamily. In terms of assembly, interacts with MORF8/RIP1 and MORF1/RIP8.

Its subcellular location is the mitochondrion. In terms of biological role, involved in C-to-U editing of mitochondrial RNA. Required specifically for editing the mitochondrial NAD4, MT-CYB/COB and RPL16 transcripts. This is Pentatricopeptide repeat-containing protein At4g14050, mitochondrial (PCMP-H13) from Arabidopsis thaliana (Mouse-ear cress).